A 297-amino-acid chain; its full sequence is Acetylglutamate kinase (297 aa).

Substrate-binding positions include 68–69 (GG), arginine 90, and asparagine 195.

This sequence belongs to the acetylglutamate kinase family. ArgB subfamily.

The protein localises to the cytoplasm. It carries out the reaction N-acetyl-L-glutamate + ATP = N-acetyl-L-glutamyl 5-phosphate + ADP. The protein operates within amino-acid biosynthesis; L-arginine biosynthesis; N(2)-acetyl-L-ornithine from L-glutamate: step 2/4. Functionally, catalyzes the ATP-dependent phosphorylation of N-acetyl-L-glutamate. In Chelativorans sp. (strain BNC1), this protein is Acetylglutamate kinase.